The primary structure comprises 505 residues: Glutamate--tRNA ligase (505 aa).

The 'HIGH' region motif lies at P12–T22. Residues K253–R257 carry the 'KMSKS' region motif. K256 is a binding site for ATP.

It belongs to the class-I aminoacyl-tRNA synthetase family. Glutamate--tRNA ligase type 1 subfamily. As to quaternary structure, monomer.

It is found in the cytoplasm. The catalysed reaction is tRNA(Glu) + L-glutamate + ATP = L-glutamyl-tRNA(Glu) + AMP + diphosphate. Its function is as follows. Catalyzes the attachment of glutamate to tRNA(Glu) in a two-step reaction: glutamate is first activated by ATP to form Glu-AMP and then transferred to the acceptor end of tRNA(Glu). In Chlamydia caviae (strain ATCC VR-813 / DSM 19441 / 03DC25 / GPIC) (Chlamydophila caviae), this protein is Glutamate--tRNA ligase.